Consider the following 553-residue polypeptide: CTP synthase (553 aa).

The amidoligase domain stretch occupies residues 1–275 (MPTETEYDPS…DQYVMEQFDM (275 aa)). CTP is bound at residue S24. S24 serves as a coordination point for UTP. 25–30 (GLGKGI) contributes to the ATP binding site. Residue Y65 coordinates L-glutamine. D82 contributes to the ATP binding site. Mg(2+) is bound by residues D82 and E150. CTP contacts are provided by residues 157–159 (DIE), 196–201 (KTKPTQ), and K232. UTP contacts are provided by residues 196-201 (KTKPTQ) and K232. In terms of domain architecture, Glutamine amidotransferase type-1 spans 308–540 (KYALEDAYMS…LDAVLERADV (233 aa)). G362 is an L-glutamine binding site. The active-site Nucleophile; for glutamine hydrolysis is the C389. Residues 390 to 393 (LGFQ), E413, and R470 contribute to the L-glutamine site. Residues H513 and E515 contribute to the active site.

It belongs to the CTP synthase family. In terms of assembly, homotetramer.

It carries out the reaction UTP + L-glutamine + ATP + H2O = CTP + L-glutamate + ADP + phosphate + 2 H(+). The enzyme catalyses L-glutamine + H2O = L-glutamate + NH4(+). It catalyses the reaction UTP + NH4(+) + ATP = CTP + ADP + phosphate + 2 H(+). It participates in pyrimidine metabolism; CTP biosynthesis via de novo pathway; CTP from UDP: step 2/2. Allosterically activated by GTP, when glutamine is the substrate; GTP has no effect on the reaction when ammonia is the substrate. The allosteric effector GTP functions by stabilizing the protein conformation that binds the tetrahedral intermediate(s) formed during glutamine hydrolysis. Inhibited by the product CTP, via allosteric rather than competitive inhibition. In terms of biological role, catalyzes the ATP-dependent amination of UTP to CTP with either L-glutamine or ammonia as the source of nitrogen. Regulates intracellular CTP levels through interactions with the four ribonucleotide triphosphates. The sequence is that of CTP synthase from Halobacterium salinarum (strain ATCC 29341 / DSM 671 / R1).